A 64-amino-acid chain; its full sequence is Putative neurotoxin 6 (64 aa).

Positions 1 to 24 are cleaved as a signal peptide; the sequence is MKNKFAALVITLFVLVLAIDNVTT.

It belongs to the scolopendra neurotoxin 6 family. Contains 3 disulfide bonds. In terms of tissue distribution, expressed by the venom gland.

It localises to the secreted. The polypeptide is Putative neurotoxin 6 (Scolopendra mutilans (Chinese red-headed centipede)).